The following is a 192-amino-acid chain: Probable GTP-binding protein EngB (192 aa).

Residues 22–192 enclose the EngB-type G domain; sequence QLPEIVFVGR…LLEQLAIYTG (171 aa). Residues 30-37, 57-61, 75-78, 142-145, and 172-174 contribute to the GTP site; these read GRSNVGKS, GKTQL, DLPG, TKYD, and YSA. Mg(2+)-binding residues include Ser37 and Thr59.

Belongs to the TRAFAC class TrmE-Era-EngA-EngB-Septin-like GTPase superfamily. EngB GTPase family. Requires Mg(2+) as cofactor.

Necessary for normal cell division and for the maintenance of normal septation. The sequence is that of Probable GTP-binding protein EngB from Chlorobium phaeobacteroides (strain BS1).